A 492-amino-acid chain; its full sequence is Histone-lysine N-methyltransferase PRDM7 (492 aa).

The segment at 1–22 (MSPERSQEESPEGDTERTERKP) is disordered. In terms of domain architecture, KRAB-related spans 23-86 (MVKDAFKDIS…RRQAIKLQVD (64 aa)). The tract at residues 111 to 179 (EQSKHQKGMP…ELRRKETEGK (69 aa)) is disordered. The span at 135–150 (GTPNLLNTSDSEQAQK) shows a compositional bias: polar residues. Residues 167-179 (LKLELRRKETEGK) are compositionally biased toward basic and acidic residues. Residues 244-358 (PGLRIGPSGI…PGCELLVWSG (115 aa)) form the SET domain.

It localises to the nucleus. The protein resides in the chromosome. The catalysed reaction is N(6),N(6)-dimethyl-L-lysyl(4)-[histone H3] + S-adenosyl-L-methionine = N(6),N(6),N(6)-trimethyl-L-lysyl(4)-[histone H3] + S-adenosyl-L-homocysteine + H(+). Histone methyltransferase that selectively methylates 'Lys-4' of dimethylated histone H3 (H3K4me2) to produce trimethylated 'Lys-4' histone H3 (H3K4me3). May play a role in epigenetic regulation of gene expression by defining an active chromatin state. The protein is Histone-lysine N-methyltransferase PRDM7 of Homo sapiens (Human).